Consider the following 416-residue polypeptide: Serine hydroxymethyltransferase (416 aa).

Residues L118 and 122–124 each bind (6S)-5,6,7,8-tetrahydrofolate; that span reads GHL. K227 is subject to N6-(pyridoxal phosphate)lysine. (6S)-5,6,7,8-tetrahydrofolate is bound by residues E242 and 350-352; that span reads SPF.

Belongs to the SHMT family. In terms of assembly, homodimer. Requires pyridoxal 5'-phosphate as cofactor.

It localises to the cytoplasm. It catalyses the reaction (6R)-5,10-methylene-5,6,7,8-tetrahydrofolate + glycine + H2O = (6S)-5,6,7,8-tetrahydrofolate + L-serine. It functions in the pathway one-carbon metabolism; tetrahydrofolate interconversion. The protein operates within amino-acid biosynthesis; glycine biosynthesis; glycine from L-serine: step 1/1. Its function is as follows. Catalyzes the reversible interconversion of serine and glycine with tetrahydrofolate (THF) serving as the one-carbon carrier. This reaction serves as the major source of one-carbon groups required for the biosynthesis of purines, thymidylate, methionine, and other important biomolecules. Also exhibits THF-independent aldolase activity toward beta-hydroxyamino acids, producing glycine and aldehydes, via a retro-aldol mechanism. The sequence is that of Serine hydroxymethyltransferase from Syntrophotalea carbinolica (strain DSM 2380 / NBRC 103641 / GraBd1) (Pelobacter carbinolicus).